The following is a 911-amino-acid chain: DNA polymerase I (911 aa).

Residues 186-280 (VTPAQYPDLA…DTLRLQPWDR (95 aa)) enclose the 5'-3' exonuclease domain. The region spanning 320–497 (RGGLLESGTV…LAAALDAELD (178 aa)) is the 3'-5' exonuclease domain.

This sequence belongs to the DNA polymerase type-A family. As to quaternary structure, single-chain monomer with multiple functions.

It carries out the reaction DNA(n) + a 2'-deoxyribonucleoside 5'-triphosphate = DNA(n+1) + diphosphate. In addition to polymerase activity, this DNA polymerase exhibits 3'-5' and 5'-3' exonuclease activity. This Mycobacterium leprae (strain TN) protein is DNA polymerase I (polA).